Consider the following 547-residue polypeptide: uncharacterized protein (547 aa).

Residues M1–S21 are Extracellular-facing. Residues F22–A42 form a helical membrane-spanning segment. At P43–K58 the chain is on the cytoplasmic side. The helical transmembrane segment at L59–D79 threads the bilayer. The Extracellular portion of the chain corresponds to R80–K83. Residues L84–Y104 traverse the membrane as a helical segment. Over K105–S110 the chain is Cytoplasmic. Residues T111 to A131 traverse the membrane as a helical segment. At S132 to R144 the chain is on the extracellular side. The helical transmembrane segment at G145–L165 threads the bilayer. Topologically, residues C166–E175 are cytoplasmic. The helical transmembrane segment at H176–L196 threads the bilayer. Residues D197–Y323 lie on the Extracellular side of the membrane. Position 237 is a phosphoserine (S237). Residues L275–N300 are disordered. Residues I324–V344 form a helical membrane-spanning segment. The Cytoplasmic segment spans residues Q345–L398. Residues W399–F419 form a helical membrane-spanning segment. Residues S420 to S437 lie on the Extracellular side of the membrane. The chain crosses the membrane as a helical span at residues V438 to V458. The Cytoplasmic segment spans residues A459–T469. A helical membrane pass occupies residues L470–G490. At R491–T514 the chain is on the extracellular side. A helical transmembrane segment spans residues F515–Y535. Residues T536–L547 lie on the Cytoplasmic side of the membrane.

The protein resides in the membrane. This is an uncharacterized protein from Saccharomyces cerevisiae (strain ATCC 204508 / S288c) (Baker's yeast).